The sequence spans 248 residues: Triosephosphate isomerase (248 aa).

9 to 11 (NWK) is a binding site for substrate. His-94 acts as the Electrophile in catalysis. Residue Glu-166 is the Proton acceptor of the active site. Substrate is bound by residues Gly-172, Ser-212, and 233–234 (GG).

This sequence belongs to the triosephosphate isomerase family. As to quaternary structure, homodimer.

The protein localises to the cytoplasm. It catalyses the reaction D-glyceraldehyde 3-phosphate = dihydroxyacetone phosphate. It participates in carbohydrate biosynthesis; gluconeogenesis. Its pathway is carbohydrate degradation; glycolysis; D-glyceraldehyde 3-phosphate from glycerone phosphate: step 1/1. In terms of biological role, involved in the gluconeogenesis. Catalyzes stereospecifically the conversion of dihydroxyacetone phosphate (DHAP) to D-glyceraldehyde-3-phosphate (G3P). This is Triosephosphate isomerase from Thermoanaerobacter sp. (strain X514).